The chain runs to 306 residues: Pantothenate kinase (306 aa).

91-98 (GSVAVGKS) is an ATP binding site.

This sequence belongs to the prokaryotic pantothenate kinase family.

It is found in the cytoplasm. The enzyme catalyses (R)-pantothenate + ATP = (R)-4'-phosphopantothenate + ADP + H(+). Its pathway is cofactor biosynthesis; coenzyme A biosynthesis; CoA from (R)-pantothenate: step 1/5. The sequence is that of Pantothenate kinase (coaA) from Streptococcus pyogenes serotype M3 (strain ATCC BAA-595 / MGAS315).